Reading from the N-terminus, the 246-residue chain is Ribonuclease 3 (246 aa).

An RNase III domain is found at I30–G152. E65 lines the Mg(2+) pocket. Residue D69 is part of the active site. Positions 138 and 141 each coordinate Mg(2+). E141 is a catalytic residue. The region spanning H177 to Q246 is the DRBM domain.

The protein belongs to the ribonuclease III family. In terms of assembly, homodimer. Mg(2+) is required as a cofactor.

Its subcellular location is the cytoplasm. The enzyme catalyses Endonucleolytic cleavage to 5'-phosphomonoester.. Functionally, digests double-stranded RNA. Involved in the processing of primary rRNA transcript to yield the immediate precursors to the large and small rRNAs (23S and 16S). Processes some mRNAs, and tRNAs when they are encoded in the rRNA operon. Processes pre-crRNA and tracrRNA of type II CRISPR loci if present in the organism. This chain is Ribonuclease 3, found in Zymomonas mobilis subsp. mobilis (strain ATCC 31821 / ZM4 / CP4).